The sequence spans 115 residues: UPF0738 protein SAV1005 (115 aa).

The protein belongs to the UPF0738 family.

This is UPF0738 protein SAV1005 from Staphylococcus aureus (strain Mu50 / ATCC 700699).